The following is a 238-amino-acid chain: Large ribosomal subunit protein uL1 (238 aa).

This sequence belongs to the universal ribosomal protein uL1 family. Part of the 50S ribosomal subunit.

Binds directly to 23S rRNA. The L1 stalk is quite mobile in the ribosome, and is involved in E site tRNA release. Functionally, protein L1 is also a translational repressor protein, it controls the translation of the L11 operon by binding to its mRNA. The sequence is that of Large ribosomal subunit protein uL1 from Trichormus variabilis (strain ATCC 29413 / PCC 7937) (Anabaena variabilis).